We begin with the raw amino-acid sequence, 294 residues long: Syntaxin-19 (294 aa).

A t-SNARE coiled-coil homology domain is found at 209 to 271; it reads LSEIEQRHKE…NNTKEKFGLA (63 aa).

This sequence belongs to the syntaxin family. In terms of assembly, interacts with EGFR.

The protein localises to the cell membrane. It localises to the cytoplasm. Functionally, plays a role in endosomal trafficking of the epidermal growth factor receptor (EGFR). The sequence is that of Syntaxin-19 (STX19) from Pongo abelii (Sumatran orangutan).